A 294-amino-acid polypeptide reads, in one-letter code: UPF0761 membrane protein MADE_1017605/MADE_1018330 (294 aa).

The next 6 membrane-spanning stretches (helical) occupy residues Leu45–Phe65, Ala99–Ser119, Phe141–Val161, Phe182–Val202, Ala213–Leu233, and Ala247–Phe267.

The protein belongs to the UPF0761 family.

It localises to the cell inner membrane. This Alteromonas mediterranea (strain DSM 17117 / CIP 110805 / LMG 28347 / Deep ecotype) protein is UPF0761 membrane protein MADE_1017605/MADE_1018330.